The sequence spans 451 residues: Tubulin alpha-1B chain (451 aa).

Positions 1 to 4 (MREC) match the MREC motif motif. 4 residues coordinate GTP: glycine 10, glutamine 11, alanine 12, and glutamine 15. The residue at position 40 (lysine 40) is an N6,N6,N6-trimethyllysine; alternate. Lysine 40 bears the N6-acetyllysine; alternate mark. Serine 48 carries the phosphoserine modification. GTP contacts are provided by glutamate 71, alanine 99, serine 140, glycine 143, glycine 144, threonine 145, glycine 146, threonine 179, glutamate 183, asparagine 206, tyrosine 224, and asparagine 228. Glutamate 71 is a binding site for Mg(2+). Serine 232 is modified (phosphoserine). GTP is bound at residue leucine 252. The active site involves glutamate 254. At tyrosine 282 the chain carries 3'-nitrotyrosine. Lysine 326 is covalently cross-linked (Glycyl lysine isopeptide (Lys-Gly) (interchain with G-Cter in ubiquitin)). Omega-N-methylarginine is present on arginine 339. Lysine 370 participates in a covalent cross-link: Glycyl lysine isopeptide (Lys-Gly) (interchain with G-Cter in ubiquitin). The interval 432 to 451 (YEEVGVDSVEGEGEEEGEEY) is disordered. Phosphoserine is present on serine 439. A 5-glutamyl polyglutamate mark is found at glutamate 443 and glutamate 445. Tyrosine 451 is modified (3'-nitrotyrosine).

Belongs to the tubulin family. As to quaternary structure, heterodimer of alpha- and beta-tubulin. A typical microtubule is a hollow water-filled tube with an outer diameter of 25 nm and an inner diameter of 15 nM. Alpha-beta heterodimers associate head-to-tail to form protofilaments running lengthwise along the microtubule wall with the beta-tubulin subunit facing the microtubule plus end conferring a structural polarity. Microtubules usually have 13 protofilaments but different protofilament numbers can be found in some organisms and specialized cells. Interacts with gamma-tubulin; the interaction allows microtubules to nucleate from the gamma-tubulin ring complex (gTuRC). Nascent microtubule interacts (via alpha-tubulin MREC motif) with TTC5/STRAP; this interaction may result in tubulin mRNA-targeted degradation. Component of sperm flagellar doublet microtubules. Requires Mg(2+) as cofactor. Post-translationally, some glutamate residues at the C-terminus are polyglutamylated, resulting in polyglutamate chains on the gamma-carboxyl group. Polyglutamylation plays a key role in microtubule severing by spastin (SPAST). SPAST preferentially recognizes and acts on microtubules decorated with short polyglutamate tails: severing activity by SPAST increases as the number of glutamates per tubulin rises from one to eight, but decreases beyond this glutamylation threshold. Glutamylation is also involved in cilia motility. Some glutamate residues at the C-terminus are monoglycylated but not polyglycylated due to the absence of functional TTLL10 in human. Monoglycylation is mainly limited to tubulin incorporated into cilia and flagella axonemes, which is required for their stability and maintenance. Flagella glycylation controls sperm motility. Both polyglutamylation and monoglycylation can coexist on the same protein on adjacent residues, and lowering glycylation levels increases polyglutamylation, and reciprocally. In terms of processing, acetylation of alpha chains at Lys-40 is located inside the microtubule lumen. This modification has been correlated with increased microtubule stability, intracellular transport and ciliary assembly. Post-translationally, methylation of alpha chains at Lys-40 is found in mitotic microtubules and is required for normal mitosis and cytokinesis contributing to genomic stability. Nitration of Tyr-451 is irreversible and interferes with normal dynein intracellular distribution. In terms of processing, undergoes a tyrosination/detyrosination cycle, the cyclic removal and re-addition of a C-terminal tyrosine residue by the enzymes tubulin tyrosine carboxypeptidase (MATCAP1/KIAA0895L, VASH1 or VASH2) and tubulin tyrosine ligase (TTL), respectively. Post-translationally, tyrosination promotes microtubule interaction with CAP-Gly domain-containing proteins such as CLIP1, CLIP2 and DCTN1. Tyrosination regulates the initiation of dynein-dynactin motility via interaction with DCTN1, which brings the dynein-dynactin complex into contact with microtubules. In neurons, tyrosinated tubulins mediate the initiation of retrograde vesicle transport. Detyrosination is involved in metaphase plate congression by guiding chromosomes during mitosis: detyrosination promotes interaction with CENPE, promoting pole-proximal transport of chromosomes toward the equator. Detyrosination increases microtubules-dependent mechanotransduction in dystrophic cardiac and skeletal muscle. In cardiomyocytes, detyrosinated microtubules are required to resist to contractile compression during contraction: detyrosination promotes association with desmin (DES) at force-generating sarcomeres, leading to buckled microtubules and mechanical resistance to contraction.

It localises to the cytoplasm. Its subcellular location is the cytoskeleton. It carries out the reaction GTP + H2O = GDP + phosphate + H(+). Its function is as follows. Tubulin is the major constituent of microtubules, protein filaments consisting of alpha- and beta-tubulin heterodimers. Microtubules grow by the addition of GTP-tubulin dimers to the microtubule end, where a stabilizing cap forms. Below the cap, tubulin dimers are in GDP-bound state, owing to GTPase activity of alpha-tubulin. The polypeptide is Tubulin alpha-1B chain (TUBA1B) (Homo sapiens (Human)).